The chain runs to 225 residues: 3-dehydroquinate dehydratase (225 aa).

3-dehydroquinate contacts are provided by residues Ser-6, 30–32 (EWR), and Arg-62. The Proton donor/acceptor role is filled by His-118. Lys-143 (schiff-base intermediate with substrate) is an active-site residue. Residues Arg-186, Ser-205, and Gln-209 each contribute to the 3-dehydroquinate site.

This sequence belongs to the type-I 3-dehydroquinase family. In terms of assembly, homodimer.

The enzyme catalyses 3-dehydroquinate = 3-dehydroshikimate + H2O. The protein operates within metabolic intermediate biosynthesis; chorismate biosynthesis; chorismate from D-erythrose 4-phosphate and phosphoenolpyruvate: step 3/7. In terms of biological role, involved in the third step of the chorismate pathway, which leads to the biosynthesis of aromatic amino acids. Catalyzes the cis-dehydration of 3-dehydroquinate (DHQ) and introduces the first double bond of the aromatic ring to yield 3-dehydroshikimate. The chain is 3-dehydroquinate dehydratase from Streptococcus pneumoniae (strain Hungary19A-6).